A 127-amino-acid polypeptide reads, in one-letter code: Small ribosomal subunit protein eS8 (127 aa).

The disordered stretch occupies residues 1 to 24 (MKWQGKSARKPTGGRLVPARGKRK).

Belongs to the eukaryotic ribosomal protein eS8 family. In terms of assembly, part of the 30S ribosomal subunit.

The chain is Small ribosomal subunit protein eS8 from Methanothrix thermoacetophila (strain DSM 6194 / JCM 14653 / NBRC 101360 / PT) (Methanosaeta thermophila).